The following is a 240-amino-acid chain: UDP-2,3-diacylglucosamine hydrolase (240 aa).

Mn(2+) is bound by residues D8, H10, D41, N79, and H114. N79–R80 is a substrate binding site. The substrate site is built by D122, S160, N164, K167, and H195. Residues H195 and H197 each coordinate Mn(2+).

The protein belongs to the LpxH family. Mn(2+) is required as a cofactor.

It localises to the cell inner membrane. The enzyme catalyses UDP-2-N,3-O-bis[(3R)-3-hydroxytetradecanoyl]-alpha-D-glucosamine + H2O = 2-N,3-O-bis[(3R)-3-hydroxytetradecanoyl]-alpha-D-glucosaminyl 1-phosphate + UMP + 2 H(+). Its pathway is glycolipid biosynthesis; lipid IV(A) biosynthesis; lipid IV(A) from (3R)-3-hydroxytetradecanoyl-[acyl-carrier-protein] and UDP-N-acetyl-alpha-D-glucosamine: step 4/6. Its function is as follows. Hydrolyzes the pyrophosphate bond of UDP-2,3-diacylglucosamine to yield 2,3-diacylglucosamine 1-phosphate (lipid X) and UMP by catalyzing the attack of water at the alpha-P atom. Involved in the biosynthesis of lipid A, a phosphorylated glycolipid that anchors the lipopolysaccharide to the outer membrane of the cell. The polypeptide is UDP-2,3-diacylglucosamine hydrolase (Escherichia coli O6:H1 (strain CFT073 / ATCC 700928 / UPEC)).